The primary structure comprises 193 residues: Potassium-transporting ATPase KdpC subunit (193 aa).

A helical transmembrane segment spans residues 9–29; sequence VLMTVVTTVLLGLVYPLLITG.

It belongs to the KdpC family. The system is composed of three essential subunits: KdpA, KdpB and KdpC.

Its subcellular location is the cell inner membrane. Functionally, part of the high-affinity ATP-driven potassium transport (or Kdp) system, which catalyzes the hydrolysis of ATP coupled with the electrogenic transport of potassium into the cytoplasm. This subunit acts as a catalytic chaperone that increases the ATP-binding affinity of the ATP-hydrolyzing subunit KdpB by the formation of a transient KdpB/KdpC/ATP ternary complex. The sequence is that of Potassium-transporting ATPase KdpC subunit from Koribacter versatilis (strain Ellin345).